Consider the following 285-residue polypeptide: Inositol oxygenase (285 aa).

Arginine 29 provides a ligand contact to substrate. Residue serine 33 is modified to Phosphoserine. 85–87 (DES) provides a ligand contact to substrate. 3 residues coordinate Fe cation: histidine 98, histidine 123, and aspartate 124. Substrate contacts are provided by residues lysine 127 and 141 to 142 (GD). Fe cation is bound by residues histidine 194, histidine 220, and aspartate 253. Substrate is bound at residue 220 to 221 (HS).

The protein belongs to the myo-inositol oxygenase family. Fe cation is required as a cofactor.

The protein resides in the cytoplasm. The enzyme catalyses myo-inositol + O2 = D-glucuronate + H2O + H(+). It functions in the pathway polyol metabolism; myo-inositol degradation into D-glucuronate; D-glucuronate from myo-inositol: step 1/1. In Pongo abelii (Sumatran orangutan), this protein is Inositol oxygenase (MIOX).